Reading from the N-terminus, the 446-residue chain is MTQELHIVGGGMAGSEAAWQAAHMGVDVVIHEMRPKVETFAHQTGNLAEMVCSNSFRSDDDEQNAVGLLHWEMRAANSLIMTTAGEHRLPAGGALAVDRDPFAESVTAKLKALPNVRVSYEEVTDLPTEGHWIFATGPLTSPALGEAIQRETGAERLAFFDAIAPIVYAESIDMSQAWMQSRYDKGETEEERTAYLNCPMTKDQYEAFIDALLAADKTEFHEGETAGYFDGCLPIEVMAERGRETLRHGPMKPVGLTNPHKPDEKAWAVVQLRRDNALGTLFNIVGFQTKMKYGAQTDVFRMIPGLENAKFARLGGIHRNTFLNSPTLLDHEMRLKSKPNIRFAGQVTGVEGYVESAAMGLLAGRMAAAEILGKDLPQVPQDSAMGALIHHITGGAEAKTFQPMNVNFGLFRPVEGLKGGRRGRKDRYKAYTDRAKVAWQEWLTNF.

Position 9–14 (9–14 (GGGMAG)) interacts with FAD.

This sequence belongs to the MnmG family. TrmFO subfamily. FAD serves as cofactor.

It localises to the cytoplasm. The enzyme catalyses uridine(54) in tRNA + (6R)-5,10-methylene-5,6,7,8-tetrahydrofolate + NADH + H(+) = 5-methyluridine(54) in tRNA + (6S)-5,6,7,8-tetrahydrofolate + NAD(+). It catalyses the reaction uridine(54) in tRNA + (6R)-5,10-methylene-5,6,7,8-tetrahydrofolate + NADPH + H(+) = 5-methyluridine(54) in tRNA + (6S)-5,6,7,8-tetrahydrofolate + NADP(+). Functionally, catalyzes the folate-dependent formation of 5-methyl-uridine at position 54 (M-5-U54) in all tRNAs. The sequence is that of Methylenetetrahydrofolate--tRNA-(uracil-5-)-methyltransferase TrmFO from Ruegeria sp. (strain TM1040) (Silicibacter sp.).